The chain runs to 516 residues: Maturase K (516 aa).

The protein belongs to the intron maturase 2 family. MatK subfamily.

Its subcellular location is the plastid. It localises to the chloroplast. Its function is as follows. Usually encoded in the trnK tRNA gene intron. Probably assists in splicing its own and other chloroplast group II introns. In Chara globularis (Fragile stonewort), this protein is Maturase K.